A 718-amino-acid chain; its full sequence is Tegument protein UL46 (718 aa).

Disordered stretches follow at residues 433-510 and 581-611; these read SAGP…EPPA and TADDDDDDARRKATHAASARERHAPYEDDES. Residues 444-454 are compositionally biased toward gly residues; that stretch reads GPGGHRAGGGT. Residues 455 to 467 are compositionally biased toward basic and acidic residues; it reads CREKIQRARRDNE.

It belongs to the herpesviridae HHV-1 VP11/12 protein family. Interacts with VP16. Interacts with host LCK, PIK3R1, SHC1 AND GRB2; these interactions promote the activation of the PI3K/AKT pathway. Interacts with host YWHAB. Interacts with ICP0; this interaction targets UL46 for degradation by the proteasome. Interacts (via N-terminus) with host TMEM173. Interacts (via C-terminus) with host TBK1. Interacts with host DOK2. Phosphorylated by host LCK. The phosphorylation seems to be lymphocyte-specific.

The protein resides in the virion tegument. It is found in the host cytoplasm. The protein localises to the host cell membrane. In terms of biological role, plays a role in the activation of the host PI3K/AKT pathway to promote cell survival. Interacts with and activates host LCK and thereby recruits downstream partners SHC1, GRB2 and PI3KR1 in order to activate the PI3K pathway by phosphorylating host AKT on its activating residues. This mechanism is inhibited by the viral protein US3 that instead promotes incorporation of UL46 into virions. Plays a role in the inhibition of TMEM173/STING-mediated type I interferon production. Interacts with host DOK2 and induces its degradation. This immune evasion mechanism to inactivate T-cells may play an important role during pathogenesis. This is Tegument protein UL46 from Homo sapiens (Human).